Here is a 141-residue protein sequence, read N- to C-terminus: Large ribosomal subunit protein uL22c (141 aa).

The protein belongs to the universal ribosomal protein uL22 family. Part of the 50S ribosomal subunit.

The protein resides in the plastid. The protein localises to the chloroplast. This protein binds specifically to 23S rRNA. In terms of biological role, the globular domain of the protein is located near the polypeptide exit tunnel on the outside of the subunit, while an extended beta-hairpin is found that lines the wall of the exit tunnel in the center of the 70S ribosome. The protein is Large ribosomal subunit protein uL22c (rpl22) of Chloranthus spicatus (Chulantree).